A 232-amino-acid polypeptide reads, in one-letter code: Phosphatidylserine decarboxylase proenzyme (232 aa).

The Schiff-base intermediate with substrate; via pyruvic acid role is filled by S190. Position 190 is a pyruvic acid (Ser); by autocatalysis (S190).

It belongs to the phosphatidylserine decarboxylase family. PSD-A subfamily. In terms of assembly, heterodimer of a large membrane-associated beta subunit and a small pyruvoyl-containing alpha subunit. Pyruvate is required as a cofactor. In terms of processing, is synthesized initially as an inactive proenzyme. Formation of the active enzyme involves a self-maturation process in which the active site pyruvoyl group is generated from an internal serine residue via an autocatalytic post-translational modification. Two non-identical subunits are generated from the proenzyme in this reaction, and the pyruvate is formed at the N-terminus of the alpha chain, which is derived from the carboxyl end of the proenzyme. The post-translation cleavage follows an unusual pathway, termed non-hydrolytic serinolysis, in which the side chain hydroxyl group of the serine supplies its oxygen atom to form the C-terminus of the beta chain, while the remainder of the serine residue undergoes an oxidative deamination to produce ammonia and the pyruvoyl prosthetic group on the alpha chain.

It localises to the cell membrane. The catalysed reaction is a 1,2-diacyl-sn-glycero-3-phospho-L-serine + H(+) = a 1,2-diacyl-sn-glycero-3-phosphoethanolamine + CO2. It participates in phospholipid metabolism; phosphatidylethanolamine biosynthesis; phosphatidylethanolamine from CDP-diacylglycerol: step 2/2. In terms of biological role, catalyzes the formation of phosphatidylethanolamine (PtdEtn) from phosphatidylserine (PtdSer). This is Phosphatidylserine decarboxylase proenzyme from Cereibacter sphaeroides (strain ATCC 17025 / ATH 2.4.3) (Rhodobacter sphaeroides).